The chain runs to 374 residues: tRNA 2-selenouridine synthase (374 aa).

Positions 12–136 (FLRDVPMLDT…MRGFLLQTID (125 aa)) constitute a Rhodanese domain. Cys95 serves as the catalytic S-selanylcysteine intermediate.

Belongs to the SelU family. In terms of assembly, monomer.

The catalysed reaction is 5-methylaminomethyl-2-thiouridine(34) in tRNA + selenophosphate + (2E)-geranyl diphosphate + H2O + H(+) = 5-methylaminomethyl-2-selenouridine(34) in tRNA + (2E)-thiogeraniol + phosphate + diphosphate. It catalyses the reaction 5-methylaminomethyl-2-thiouridine(34) in tRNA + (2E)-geranyl diphosphate = 5-methylaminomethyl-S-(2E)-geranyl-thiouridine(34) in tRNA + diphosphate. It carries out the reaction 5-methylaminomethyl-S-(2E)-geranyl-thiouridine(34) in tRNA + selenophosphate + H(+) = 5-methylaminomethyl-2-(Se-phospho)selenouridine(34) in tRNA + (2E)-thiogeraniol. The enzyme catalyses 5-methylaminomethyl-2-(Se-phospho)selenouridine(34) in tRNA + H2O = 5-methylaminomethyl-2-selenouridine(34) in tRNA + phosphate. Functionally, involved in the post-transcriptional modification of the uridine at the wobble position (U34) of tRNA(Lys), tRNA(Glu) and tRNA(Gln). Catalyzes the conversion of 2-thiouridine (S2U-RNA) to 2-selenouridine (Se2U-RNA). Acts in a two-step process involving geranylation of 2-thiouridine (S2U) to S-geranyl-2-thiouridine (geS2U) and subsequent selenation of the latter derivative to 2-selenouridine (Se2U) in the tRNA chain. The chain is tRNA 2-selenouridine synthase from Bordetella petrii (strain ATCC BAA-461 / DSM 12804 / CCUG 43448).